The primary structure comprises 56 residues: UPF0391 membrane protein Rru_A0119 (56 aa).

Transmembrane regions (helical) follow at residues W4–A24 and I30–F50.

It belongs to the UPF0391 family.

Its subcellular location is the cell membrane. In Rhodospirillum rubrum (strain ATCC 11170 / ATH 1.1.1 / DSM 467 / LMG 4362 / NCIMB 8255 / S1), this protein is UPF0391 membrane protein Rru_A0119.